A 608-amino-acid polypeptide reads, in one-letter code: Myosin light chain kinase 2, skeletal/cardiac muscle (608 aa).

A disordered region spans residues 1–160 (MATENGAVEL…RGSPAFLHSP (160 aa)). Residue A2 is modified to N-acetylalanine. Basic and acidic residues-rich tracts occupy residues 31-43 (AAEK…DPEK) and 50-63 (TKQD…KKDA). The span at 82 to 91 (GSQGPAGEGG) shows a compositional bias: gly residues. Positions 116 to 127 (ASEKKPEAEKGP) are enriched in basic and acidic residues. Phosphoserine occurs at positions 153, 159, and 161. A disordered region spans residues 214–235 (QKEAGEKAPGQADQAKVQGDTS). One can recognise a Protein kinase domain in the interval 297 to 552 (MNSKEALGGG…AAQCLAHPWL (256 aa)). ATP-binding positions include 303–311 (LGGGKFGAV) and K326. D418 (proton acceptor) is an active-site residue. Position 457 is a phosphothreonine (T457). The interval 586–598 (IAVSAANRFKKIS) is calmodulin-binding.

It belongs to the protein kinase superfamily. CAMK Ser/Thr protein kinase family. In terms of assembly, may interact with centrin.

It localises to the cytoplasm. The enzyme catalyses L-seryl-[myosin light chain] + ATP = O-phospho-L-seryl-[myosin light chain] + ADP + H(+). It carries out the reaction L-threonyl-[myosin light chain] + ATP = O-phospho-L-threonyl-[myosin light chain] + ADP + H(+). In terms of biological role, implicated in the level of global muscle contraction and cardiac function. Phosphorylates a specific serine in the N-terminus of a myosin light chain. The protein is Myosin light chain kinase 2, skeletal/cardiac muscle (MYLK2) of Oryctolagus cuniculus (Rabbit).